A 234-amino-acid polypeptide reads, in one-letter code: Small ribosomal subunit protein eS4 (234 aa).

The S4 RNA-binding domain occupies 43-106 (MPIAVWLRDY…NEYYRVLLDE (64 aa)).

This sequence belongs to the eukaryotic ribosomal protein eS4 family.

The sequence is that of Small ribosomal subunit protein eS4 from Nanoarchaeum equitans (strain Kin4-M).